The sequence spans 453 residues: tRNA modification GTPase MnmE (453 aa).

Residues Arg-22, Glu-79, and Lys-119 each coordinate (6S)-5-formyl-5,6,7,8-tetrahydrofolate. Positions Gly-215–Gly-376 constitute a TrmE-type G domain. Asn-225 lines the K(+) pocket. Residues Asn-225 to Ser-230, Thr-244 to Thr-250, Asp-269 to Gly-272, and Asn-334 to Asp-337 contribute to the GTP site. Ser-229 provides a ligand contact to Mg(2+). Thr-244, Ile-246, and Thr-249 together coordinate K(+). Position 250 (Thr-250) interacts with Mg(2+). Lys-453 provides a ligand contact to (6S)-5-formyl-5,6,7,8-tetrahydrofolate.

The protein belongs to the TRAFAC class TrmE-Era-EngA-EngB-Septin-like GTPase superfamily. TrmE GTPase family. As to quaternary structure, homodimer. Heterotetramer of two MnmE and two MnmG subunits. It depends on K(+) as a cofactor.

Its subcellular location is the cytoplasm. Its function is as follows. Exhibits a very high intrinsic GTPase hydrolysis rate. Involved in the addition of a carboxymethylaminomethyl (cmnm) group at the wobble position (U34) of certain tRNAs, forming tRNA-cmnm(5)s(2)U34. In Shewanella sp. (strain MR-7), this protein is tRNA modification GTPase MnmE.